The sequence spans 103 residues: Large ribosomal subunit protein uL24 (103 aa).

This sequence belongs to the universal ribosomal protein uL24 family. As to quaternary structure, part of the 50S ribosomal subunit.

Functionally, one of two assembly initiator proteins, it binds directly to the 5'-end of the 23S rRNA, where it nucleates assembly of the 50S subunit. One of the proteins that surrounds the polypeptide exit tunnel on the outside of the subunit. This Exiguobacterium sibiricum (strain DSM 17290 / CCUG 55495 / CIP 109462 / JCM 13490 / 255-15) protein is Large ribosomal subunit protein uL24.